We begin with the raw amino-acid sequence, 399 residues long: C-type lectin domain family 4 member M (399 aa).

Residues 1 to 49 are Cytoplasmic-facing; that stretch reads MSDSKEQRVQPLGLLEEDPTTSGIRLFPRDFQFQQTHGHKSSTGCLGHG. Positions 14–15 match the Endocytosis signal motif; that stretch reads LL. The helical; Signal-anchor for type II membrane protein transmembrane segment at 50–70 threads the bilayer; the sequence is PLVLQLLSFTLLAGVLVAILV. Topologically, residues 71 to 399 are extracellular; the sequence is QVYKVPSSLS…KKPTACFRDE (329 aa). Asn-92 carries an N-linked (GlcNAc...) asparagine glycan. 7 tandem repeats follow at residues 108–130, 131–153, 154–176, 177–199, 200–222, 223–245, and 246–268. The tract at residues 108–269 is 7 X approximate tandem repeats; sequence KLQEIYQELI…AFERLCCRCP (162 aa). 4 disulfide bridges follow: Cys-265/Cys-395, Cys-268/Cys-279, Cys-296/Cys-389, and Cys-368/Cys-381. The C-type lectin domain occupies 274–390; it reads FFQGNCYFIS…CNVDNYWICK (117 aa). The Ca(2+) site is built by Glu-359, Asn-361, Ser-363, Glu-366, Asn-377, and Asp-378. N-linked (GlcNAc...) asparagine glycosylation is present at Asn-361.

In terms of assembly, homotetramer.

The protein resides in the membrane. In terms of biological role, probable pathogen-recognition receptor involved in peripheral immune surveillance in liver. May mediate the endocytosis of pathogens which are subsequently degraded in lysosomal compartments. Probably recognizes in a calcium-dependent manner high mannose N-linked oligosaccharides in a variety of pathogen antigens. Is a receptor for ICAM3, probably by binding to mannose-like carbohydrates. The sequence is that of C-type lectin domain family 4 member M (CLEC4M) from Hylobates lar (Lar gibbon).